The chain runs to 440 residues: tRNA(Ile)-lysidine synthase (440 aa).

Residue 31–36 (SGGADS) participates in ATP binding.

The protein belongs to the tRNA(Ile)-lysidine synthase family.

It is found in the cytoplasm. The enzyme catalyses cytidine(34) in tRNA(Ile2) + L-lysine + ATP = lysidine(34) in tRNA(Ile2) + AMP + diphosphate + H(+). Its function is as follows. Ligates lysine onto the cytidine present at position 34 of the AUA codon-specific tRNA(Ile) that contains the anticodon CAU, in an ATP-dependent manner. Cytidine is converted to lysidine, thus changing the amino acid specificity of the tRNA from methionine to isoleucine. This is tRNA(Ile)-lysidine synthase from Borreliella burgdorferi (strain ATCC 35210 / DSM 4680 / CIP 102532 / B31) (Borrelia burgdorferi).